The chain runs to 344 residues: Arginine N-succinyltransferase (344 aa).

Residue Leu-125 coordinates succinyl-CoA. Catalysis depends on His-229, which acts as the Proton donor.

Belongs to the arginine N-succinyltransferase family.

The enzyme catalyses succinyl-CoA + L-arginine = N(2)-succinyl-L-arginine + CoA + H(+). It participates in amino-acid degradation; L-arginine degradation via AST pathway; L-glutamate and succinate from L-arginine: step 1/5. Functionally, catalyzes the transfer of succinyl-CoA to arginine to produce N(2)-succinylarginine. This chain is Arginine N-succinyltransferase, found in Shigella boydii serotype 4 (strain Sb227).